Consider the following 345-residue polypeptide: Anthranilate phosphoribosyltransferase (345 aa).

5-phospho-alpha-D-ribose 1-diphosphate contacts are provided by residues G79, G82 to D83, T87, N89 to T92, K106 to G114, and S118. G79 serves as a coordination point for anthranilate. A Mg(2+)-binding site is contributed by S91. Residue N109 participates in anthranilate binding. Residue R164 coordinates anthranilate. Mg(2+)-binding residues include D223 and E224.

It belongs to the anthranilate phosphoribosyltransferase family. Homodimer. Mg(2+) serves as cofactor.

It carries out the reaction N-(5-phospho-beta-D-ribosyl)anthranilate + diphosphate = 5-phospho-alpha-D-ribose 1-diphosphate + anthranilate. Its pathway is amino-acid biosynthesis; L-tryptophan biosynthesis; L-tryptophan from chorismate: step 2/5. In terms of biological role, catalyzes the transfer of the phosphoribosyl group of 5-phosphorylribose-1-pyrophosphate (PRPP) to anthranilate to yield N-(5'-phosphoribosyl)-anthranilate (PRA). This chain is Anthranilate phosphoribosyltransferase, found in Saccharolobus islandicus (strain M.16.27) (Sulfolobus islandicus).